A 190-amino-acid polypeptide reads, in one-letter code: dCTP deaminase, dUMP-forming (190 aa).

DCTP-binding positions include 101-106 (KSSLGR), D119, 127-129 (TLE), Q148, Y162, and Q174. E129 serves as the catalytic Proton donor/acceptor. Positions 163 to 190 (GSTRVGSKYQGQRGPTPSRSYQNFITST) are disordered. Polar residues predominate over residues 171-190 (YQGQRGPTPSRSYQNFITST).

Belongs to the dCTP deaminase family. Homotrimer.

The enzyme catalyses dCTP + 2 H2O = dUMP + NH4(+) + diphosphate. The protein operates within pyrimidine metabolism; dUMP biosynthesis; dUMP from dCTP: step 1/1. Its function is as follows. Bifunctional enzyme that catalyzes both the deamination of dCTP to dUTP and the hydrolysis of dUTP to dUMP without releasing the toxic dUTP intermediate. The protein is dCTP deaminase, dUMP-forming of Mycolicibacterium paratuberculosis (strain ATCC BAA-968 / K-10) (Mycobacterium paratuberculosis).